The following is a 130-amino-acid chain: Small ribosomal subunit protein uS8 (130 aa).

This sequence belongs to the universal ribosomal protein uS8 family. As to quaternary structure, part of the 30S ribosomal subunit. Contacts proteins S5 and S12.

One of the primary rRNA binding proteins, it binds directly to 16S rRNA central domain where it helps coordinate assembly of the platform of the 30S subunit. The sequence is that of Small ribosomal subunit protein uS8 from Mannheimia succiniciproducens (strain KCTC 0769BP / MBEL55E).